The following is a 499-amino-acid chain: uncharacterized protein (499 aa).

12 helical membrane passes run 51 to 71 (LLFRLDLVLAPTIMILYLVAF), 98 to 118 (IIASVFYVTFILFEMPTTLLM), 127 to 147 (LAFIVISYSLTTIFTGFCHNF), 155 to 175 (LVLGFCEAGLFPCLALYLTMI), 187 to 207 (YLFASSALSGAFGGLFAYAVL), 220 to 240 (WLFIIEGLIGFVCGVAVYFII), 301 to 321 (CLYGFSTFLPAIISGMGYTSL), 325 to 345 (YMTIPVYILGAATYIAASFLS), 352 to 372 (GIILIIGNIFPIVGYILLLAC), 378 to 398 (VLYFACYLCSVGVYTGAGLNV), 412 to 432 (ATAISLQLAIANSSGILAGQI), and 444 to 464 (LTSLIAIFISTVLHVVNIFFL).

It belongs to the major facilitator superfamily. Allantoate permease family.

The protein localises to the golgi apparatus. The protein resides in the membrane. This is an uncharacterized protein from Schizosaccharomyces pombe (strain 972 / ATCC 24843) (Fission yeast).